A 271-amino-acid polypeptide reads, in one-letter code: Enolase-phosphatase E1 (271 aa).

Positions 16 and 18 each coordinate Mg(2+). Residues 150-151 and lysine 199 contribute to the substrate site; that span reads SS. A Mg(2+)-binding site is contributed by aspartate 226.

It belongs to the HAD-like hydrolase superfamily. MasA/MtnC family. In terms of assembly, monomer. Mg(2+) is required as a cofactor.

It localises to the cytoplasm. Its subcellular location is the nucleus. The enzyme catalyses 5-methylsulfanyl-2,3-dioxopentyl phosphate + H2O = 1,2-dihydroxy-5-(methylsulfanyl)pent-1-en-3-one + phosphate. It participates in amino-acid biosynthesis; L-methionine biosynthesis via salvage pathway; L-methionine from S-methyl-5-thio-alpha-D-ribose 1-phosphate: step 3/6. The protein operates within amino-acid biosynthesis; L-methionine biosynthesis via salvage pathway; L-methionine from S-methyl-5-thio-alpha-D-ribose 1-phosphate: step 4/6. Functionally, bifunctional enzyme that catalyzes the enolization of 2,3-diketo-5-methylthiopentyl-1-phosphate (DK-MTP-1-P) into the intermediate 2-hydroxy-3-keto-5-methylthiopentenyl-1-phosphate (HK-MTPenyl-1-P), which is then dephosphorylated to form the acireductone 1,2-dihydroxy-3-keto-5-methylthiopentene (DHK-MTPene). The chain is Enolase-phosphatase E1 from Candida dubliniensis (strain CD36 / ATCC MYA-646 / CBS 7987 / NCPF 3949 / NRRL Y-17841) (Yeast).